The following is an 86-amino-acid chain: UPF0297 protein SAHV_1604 (86 aa).

This sequence belongs to the UPF0297 family.

In Staphylococcus aureus (strain Mu3 / ATCC 700698), this protein is UPF0297 protein SAHV_1604.